The primary structure comprises 369 residues: 5-amino-6-(D-ribitylamino)uracil--L-tyrosine 4-hydroxyphenyl transferase (369 aa).

The Radical SAM core domain occupies 56–292; it reads VTFVVNRNIN…AVARLYFGPL (237 aa). Cys70, Cys74, and Cys77 together coordinate [4Fe-4S] cluster.

Belongs to the radical SAM superfamily. CofH family. In terms of assembly, consists of two subunits, CofG and CofH. Requires [4Fe-4S] cluster as cofactor.

It catalyses the reaction 5-amino-6-(D-ribitylamino)uracil + L-tyrosine + S-adenosyl-L-methionine = 5-amino-5-(4-hydroxybenzyl)-6-(D-ribitylimino)-5,6-dihydrouracil + 2-iminoacetate + 5'-deoxyadenosine + L-methionine + H(+). Its pathway is cofactor biosynthesis; coenzyme F0 biosynthesis. Functionally, catalyzes the radical-mediated synthesis of 5-amino-5-(4-hydroxybenzyl)-6-(D-ribitylimino)-5,6-dihydrouracil from 5-amino-6-(D-ribitylamino)uracil and L-tyrosine. The protein is 5-amino-6-(D-ribitylamino)uracil--L-tyrosine 4-hydroxyphenyl transferase of Methanopyrus kandleri (strain AV19 / DSM 6324 / JCM 9639 / NBRC 100938).